We begin with the raw amino-acid sequence, 567 residues long: Urease subunit alpha (567 aa).

The Urease domain maps to 129-567; it reads GGIDAHIHFI…LPLAQRYFLF (439 aa). Ni(2+)-binding residues include His-134, His-136, and Lys-217. At Lys-217 the chain carries N6-carboxylysine. His-219 is a substrate binding site. Ni(2+)-binding residues include His-246 and His-272. Catalysis depends on His-320, which acts as the Proton donor. Asp-360 provides a ligand contact to Ni(2+).

Belongs to the metallo-dependent hydrolases superfamily. Urease alpha subunit family. Heterotrimer of UreA (gamma), UreB (beta) and UreC (alpha) subunits. Three heterotrimers associate to form the active enzyme. Ni cation serves as cofactor. Post-translationally, carboxylation allows a single lysine to coordinate two nickel ions.

It is found in the cytoplasm. It carries out the reaction urea + 2 H2O + H(+) = hydrogencarbonate + 2 NH4(+). It participates in nitrogen metabolism; urea degradation; CO(2) and NH(3) from urea (urease route): step 1/1. The protein is Urease subunit alpha of Hahella chejuensis (strain KCTC 2396).